Reading from the N-terminus, the 430-residue chain is UPF0597 protein DSY1109 (430 aa).

It belongs to the UPF0597 family.

This chain is UPF0597 protein DSY1109, found in Desulfitobacterium hafniense (strain Y51).